Consider the following 155-residue polypeptide: Small ribosomal subunit protein uS7c (155 aa).

It belongs to the universal ribosomal protein uS7 family. In terms of assembly, part of the 30S ribosomal subunit.

The protein resides in the plastid. It localises to the chloroplast. In terms of biological role, one of the primary rRNA binding proteins, it binds directly to 16S rRNA where it nucleates assembly of the head domain of the 30S subunit. The polypeptide is Small ribosomal subunit protein uS7c (rps7) (Aristolochia macrophylla (Dutchman's pipe vine)).